The primary structure comprises 285 residues: Putative L(+)-tartrate dehydratase subunit alpha (285 aa).

Residues C60, C182, and C269 each coordinate iron-sulfur cluster.

Belongs to the class-I fumarase family. Tetramer of two alpha and two beta subunits. Iron-sulfur cluster serves as cofactor.

The catalysed reaction is (2R,3R)-tartrate = oxaloacetate + H2O. This is Putative L(+)-tartrate dehydratase subunit alpha from Methanocaldococcus jannaschii (strain ATCC 43067 / DSM 2661 / JAL-1 / JCM 10045 / NBRC 100440) (Methanococcus jannaschii).